The chain runs to 257 residues: Ribonuclease HII (257 aa).

An RNase H type-2 domain is found at 72–257 (TYIAGIDEVG…FAPIKDMIQK (186 aa)). Residues Asp78, Glu79, and Asp170 each coordinate a divalent metal cation.

Belongs to the RNase HII family. The cofactor is Mn(2+). Mg(2+) is required as a cofactor.

It is found in the cytoplasm. It catalyses the reaction Endonucleolytic cleavage to 5'-phosphomonoester.. Functionally, endonuclease that specifically degrades the RNA of RNA-DNA hybrids. The protein is Ribonuclease HII of Bacillus cereus (strain ZK / E33L).